The primary structure comprises 333 residues: tRNA N6-adenosine threonylcarbamoyltransferase (333 aa).

Fe cation contacts are provided by His-111 and His-115. Substrate-binding positions include Val-134–Gly-138, Asp-167, Gly-180, Asp-184, and Asn-269. Asp-297 contributes to the Fe cation binding site.

This sequence belongs to the KAE1 / TsaD family. Fe(2+) serves as cofactor.

The protein resides in the cytoplasm. The catalysed reaction is L-threonylcarbamoyladenylate + adenosine(37) in tRNA = N(6)-L-threonylcarbamoyladenosine(37) in tRNA + AMP + H(+). In terms of biological role, required for the formation of a threonylcarbamoyl group on adenosine at position 37 (t(6)A37) in tRNAs that read codons beginning with adenine. Is involved in the transfer of the threonylcarbamoyl moiety of threonylcarbamoyl-AMP (TC-AMP) to the N6 group of A37, together with TsaE and TsaB. TsaD likely plays a direct catalytic role in this reaction. The sequence is that of tRNA N6-adenosine threonylcarbamoyltransferase from Carboxydothermus hydrogenoformans (strain ATCC BAA-161 / DSM 6008 / Z-2901).